The chain runs to 245 residues: Orotidine 5'-phosphate decarboxylase (245 aa).

Residues Asp-22, Lys-44, 71–80 (DLKFHDIPNT), Thr-131, Arg-192, Gln-201, Gly-221, and Arg-222 each bind substrate. Lys-73 serves as the catalytic Proton donor.

The protein belongs to the OMP decarboxylase family. Type 1 subfamily. Homodimer.

It catalyses the reaction orotidine 5'-phosphate + H(+) = UMP + CO2. It functions in the pathway pyrimidine metabolism; UMP biosynthesis via de novo pathway; UMP from orotate: step 2/2. Catalyzes the decarboxylation of orotidine 5'-monophosphate (OMP) to uridine 5'-monophosphate (UMP). This Escherichia fergusonii (strain ATCC 35469 / DSM 13698 / CCUG 18766 / IAM 14443 / JCM 21226 / LMG 7866 / NBRC 102419 / NCTC 12128 / CDC 0568-73) protein is Orotidine 5'-phosphate decarboxylase.